The sequence spans 183 residues: Bifunctional protein PyrR (183 aa).

The PRPP-binding signature appears at 102 to 114; the sequence is VVLVDDVLYTGRT.

It belongs to the purine/pyrimidine phosphoribosyltransferase family. PyrR subfamily. As to quaternary structure, homodimer and homohexamer; in equilibrium.

The enzyme catalyses UMP + diphosphate = 5-phospho-alpha-D-ribose 1-diphosphate + uracil. Functionally, regulates transcriptional attenuation of the pyrimidine nucleotide (pyr) operon by binding in a uridine-dependent manner to specific sites on pyr mRNA. This disrupts an antiterminator hairpin in the RNA and favors formation of a downstream transcription terminator, leading to a reduced expression of downstream genes. In terms of biological role, also displays a weak uracil phosphoribosyltransferase activity which is not physiologically significant. In Listeria monocytogenes serotype 4b (strain CLIP80459), this protein is Bifunctional protein PyrR.